A 270-amino-acid chain; its full sequence is Non-structural maintenance of chromosomes element 1 homolog (270 aa).

The RING-type; atypical zinc-finger motif lies at cysteine 185 to asparagine 226. Positions leucine 236–arginine 270 are disordered. Composition is skewed to polar residues over residues asparagine 237–threonine 251 and serine 259–arginine 270.

Belongs to the NSE1 family. As to quaternary structure, component of the SMC5-SMC6 complex.

The protein resides in the nucleus. Its subcellular location is the chromosome. It is found in the telomere. The catalysed reaction is S-ubiquitinyl-[E2 ubiquitin-conjugating enzyme]-L-cysteine + [acceptor protein]-L-lysine = [E2 ubiquitin-conjugating enzyme]-L-cysteine + N(6)-ubiquitinyl-[acceptor protein]-L-lysine.. RING-type zinc finger-containing E3 ubiquitin ligase that assembles with melanoma antigen protein (MAGE) to catalyze the direct transfer of ubiquitin from E2 ubiquitin-conjugating enzyme to a specific substrate. Within MAGE-RING ubiquitin ligase complex, MAGE stimulates and specifies ubiquitin ligase activity likely through recruitment and/or stabilization of the E2 ubiquitin-conjugating enzyme at the E3:substrate complex. Involved in maintenance of genome integrity, DNA damage response and DNA repair. This is Non-structural maintenance of chromosomes element 1 homolog (nsmce1) from Xenopus laevis (African clawed frog).